The sequence spans 335 residues: MIVSILGAGAMGSALSVPLVDNGNEVRIWGTEFDTEILKSISAGREHPRLGVKLNGVEIFWPEQLEKCLENAEVVLLGVSTDGVLPVMSRILPYLKDQYIVLISKGLIDFDNSVLTVPEAVWRLKHDLRERTVAITGPAIAREVAKRMPTTVVFSSPSESSANKMKEIFETEYFGVEVTTDIIGTEITSALKNVYSIAIAWIRGYESRKNVEMSNAKGVIATRAINEMAELIEILGGDRETAFGLSGFGDLIATFRGGRNGMLGELLGKGLSIDEAMEELERRGVGVVEGYKTAEKAYRLSSKINADTKLLDSIYRVLYEGLKVEEVLFELATFK.

Gly-137 is a binding site for sn-glycerol 3-phosphate. Residue Ala-141 coordinates NADPH. 4 residues coordinate sn-glycerol 3-phosphate: Lys-192, Asp-250, Arg-259, and Asn-260. The Proton acceptor role is filled by Lys-192. NADPH is bound at residue Arg-259. NADPH-binding residues include Val-287 and Glu-289.

The protein belongs to the NAD-dependent glycerol-3-phosphate dehydrogenase family. Homodimer.

Its subcellular location is the cytoplasm. The catalysed reaction is sn-glycerol 3-phosphate + NADP(+) = dihydroxyacetone phosphate + NADPH + H(+). Catalyzes the reduction of the glycolytic intermediate dihydroxyacetone phosphate (DHAP) to sn-glycerol 3-phosphate (G3P). Shows a 15-fold preference for NADPH over NADH in the reduction process. Can also catalyze the reverse reaction in vitro. Shows no activity with dihydroxyacetone, glycerol, glycerol-2-phosphate, D-glyceraldehyde-3-phosphate, DL-glyceraldehyde, D-erythrose-4-phosphate, D-fructose-6-phosphate, beta-D-glucose-6-phosphate, or alpha-D-galactose-1-phosphate. The chain is NADP(+)-dependent glycerol-3-phosphate dehydrogenase from Archaeoglobus fulgidus (strain ATCC 49558 / DSM 4304 / JCM 9628 / NBRC 100126 / VC-16).